The chain runs to 266 residues: Methionine aminopeptidase 1 (266 aa).

Residue His-88 participates in substrate binding. Positions 106, 117, and 186 each coordinate a divalent metal cation. Residue His-193 participates in substrate binding. Glu-219 and Glu-250 together coordinate a divalent metal cation.

This sequence belongs to the peptidase M24A family. Methionine aminopeptidase type 1 subfamily. As to quaternary structure, monomer. The cofactor is Co(2+). Requires Zn(2+) as cofactor. Mn(2+) is required as a cofactor. Fe(2+) serves as cofactor.

The catalysed reaction is Release of N-terminal amino acids, preferentially methionine, from peptides and arylamides.. In terms of biological role, removes the N-terminal methionine from nascent proteins. The N-terminal methionine is often cleaved when the second residue in the primary sequence is small and uncharged (Met-Ala-, Cys, Gly, Pro, Ser, Thr, or Val). Requires deformylation of the N(alpha)-formylated initiator methionine before it can be hydrolyzed. The polypeptide is Methionine aminopeptidase 1 (Mycobacterium tuberculosis (strain CDC 1551 / Oshkosh)).